The chain runs to 679 residues: Methionine--tRNA ligase (679 aa).

A 'HIGH' region motif is present at residues 14-24; sequence PYANGSIHLGH. Cys-145, Cys-148, Cys-158, and Cys-161 together coordinate Zn(2+). Residues 331 to 335 carry the 'KMSKS' region motif; the sequence is KMSKS. ATP is bound at residue Lys-334. Positions 577-679 constitute a tRNA-binding domain; that stretch reads TFAAVDLRVA…SGAKPGQRIK (103 aa).

The protein belongs to the class-I aminoacyl-tRNA synthetase family. MetG type 1 subfamily. As to quaternary structure, homodimer. The cofactor is Zn(2+).

The protein resides in the cytoplasm. The enzyme catalyses tRNA(Met) + L-methionine + ATP = L-methionyl-tRNA(Met) + AMP + diphosphate. In terms of biological role, is required not only for elongation of protein synthesis but also for the initiation of all mRNA translation through initiator tRNA(fMet) aminoacylation. This Pseudomonas putida (strain ATCC 700007 / DSM 6899 / JCM 31910 / BCRC 17059 / LMG 24140 / F1) protein is Methionine--tRNA ligase.